We begin with the raw amino-acid sequence, 1134 residues long: MMS19 nucleotide excision repair protein homolog (1134 aa).

HEAT repeat units lie at residues 959-998, 1002-1047, 1050-1089, and 1092-1130; these read QRCF…NVPV, LDNT…KGQQ, SDNA…LPHR, and YPFR…ITSG.

This sequence belongs to the MET18/MMS19 family. As to quaternary structure, part of a complex composed of AE7, CIA1, MMS19 and NAR1. Interacts with AE7.

The protein localises to the nucleus. The protein resides in the cytoplasm. Its function is as follows. May select specific target apoproteins to which a Fe-S cluster produced by the cytosolic iron-sulfur (Fe-S) protein assembly (CIA) pathway is transferred. The polypeptide is MMS19 nucleotide excision repair protein homolog (Arabidopsis thaliana (Mouse-ear cress)).